The sequence spans 366 residues: HTH-type transcriptional regulator MSMEG_6044/MSMEI_5883 (366 aa).

Residues 11 to 66 (ATLASLAAELKVSRTTISNAYNRPDQLSADLRERIFDAAKRLGYPGPDPVARSLRT) enclose the HTH lacI-type domain. Positions 13–32 (LASLAAELKVSRTTISNAYN) form a DNA-binding region, H-T-H motif.

In terms of biological role, transcriptional regulator that negatively regulates transcription of the mce4 operon, which is involved in cholesterol transport and utilization. Acts by binding to the promoter region of the mce4 operon. This chain is HTH-type transcriptional regulator MSMEG_6044/MSMEI_5883, found in Mycolicibacterium smegmatis (strain ATCC 700084 / mc(2)155) (Mycobacterium smegmatis).